The chain runs to 477 residues: Ectonucleotide pyrophosphatase/phosphodiesterase family member 5 (477 aa).

The N-terminal stretch at 1-24 (MTSKFLLVSFILAALSLSTTFSLQ) is a signal peptide. Aspartate 36 and threonine 72 together coordinate Zn(2+). Catalysis depends on threonine 72, which acts as the Nucleophile. Asparagine 101 and asparagine 158 each carry an N-linked (GlcNAc...) asparagine glycan. Zn(2+) contacts are provided by aspartate 191, histidine 195, aspartate 238, and histidine 239. Residues asparagine 292 and asparagine 329 are each glycosylated (N-linked (GlcNAc...) asparagine). Residue histidine 339 coordinates Zn(2+). Asparagine 362, asparagine 369, asparagine 382, and asparagine 389 each carry an N-linked (GlcNAc...) asparagine glycan. The chain crosses the membrane as a helical span at residues 432–452 (PYFIGVSLGSIIVIVFFVIFI).

Belongs to the nucleotide pyrophosphatase/phosphodiesterase family. Requires Zn(2+) as cofactor. In terms of processing, N-glycosylated.

It is found in the secreted. The protein localises to the membrane. Its function is as follows. Can hydrolyze NAD but cannot hydrolyze nucleotide di- and triphosphates. Lacks lysopholipase D activity. May play a role in neuronal cell communication. The polypeptide is Ectonucleotide pyrophosphatase/phosphodiesterase family member 5 (Homo sapiens (Human)).